The following is a 205-amino-acid chain: Coatomer subunit zeta-2 (205 aa).

Residues 1 to 12 (MQRPEAWPRPHP) show a composition bias toward basic and acidic residues. Residues 1-33 (MQRPEAWPRPHPGEGASAAQAGGAAPPTRATEQ) form a disordered region. Low complexity predominate over residues 13–30 (GEGASAAQAGGAAPPTRA).

The protein belongs to the adaptor complexes small subunit family. As to quaternary structure, oligomeric complex.

The protein localises to the cytoplasm. It is found in the cytosol. Its subcellular location is the endoplasmic reticulum-Golgi intermediate compartment membrane. The protein resides in the golgi apparatus membrane. It localises to the cytoplasmic vesicle. The protein localises to the COPI-coated vesicle membrane. Its function is as follows. The coatomer is a cytosolic protein complex that binds to dilysine motifs and reversibly associates with Golgi non-clathrin-coated vesicles, which further mediate biosynthetic protein transport from the ER, via the Golgi up to the trans Golgi network. Coatomer complex is required for budding from Golgi membranes, and is essential for the retrograde Golgi-to-ER transport of dilysine-tagged proteins. The zeta subunit may be involved in regulating the coat assembly and, hence, the rate of biosynthetic protein transport due to its association-dissociation properties with the coatomer complex. The protein is Coatomer subunit zeta-2 (Copz2) of Mus musculus (Mouse).